The primary structure comprises 424 residues: UPF0053 protein MG146 (424 aa).

Residues 6–191 (SGLTLTVIIL…EQNGLFSKED (186 aa)) enclose the CNNM transmembrane domain. 4 helical membrane-spanning segments follow: residues 7–27 (GLTL…STVV), 71–91 (LITI…ILFL), 101–121 (LLSS…FCEI), and 135–155 (LVLF…ITKL). 2 CBS domains span residues 210–270 (MIKW…PKSL) and 272–332 (LNQL…IYDE).

It belongs to the UPF0053 family.

The protein resides in the cell membrane. The chain is UPF0053 protein MG146 from Mycoplasma genitalium (strain ATCC 33530 / DSM 19775 / NCTC 10195 / G37) (Mycoplasmoides genitalium).